We begin with the raw amino-acid sequence, 326 residues long: MKSIAIIGASGYTGAQITSLINADENLMIQGLYVSENSLDKGKPLSDLYPSYSHISLSLSPLCDDAKMLIVEQADAVVLATDHAVSLHLAAWFYQKGLTVFDLSGAYRFSDVEQYPKWYGFNHEYQDVLSDAVYGLAEWNSEQIASSKMIAVPGCYPTASLTALKPIGMFLTDAFPVINAVSGVTGAGRKAQLHTSFCEVSLTPYGVLGHRHQPEIATQLGQEVIFTPHLGNFKRGILATITVQLKPESTEADVAAAYAVYDDAPLITVKQNQFPKVDDVVNTPNCHLGWKFDPETHYLVVASAIDNLMKGAASQAHQCIRIHFNY.

Cys-155 is a catalytic residue.

This sequence belongs to the NAGSA dehydrogenase family. Type 1 subfamily.

Its subcellular location is the cytoplasm. The enzyme catalyses N-acetyl-L-glutamate 5-semialdehyde + phosphate + NADP(+) = N-acetyl-L-glutamyl 5-phosphate + NADPH + H(+). It participates in amino-acid biosynthesis; L-arginine biosynthesis; N(2)-acetyl-L-ornithine from L-glutamate: step 3/4. Its function is as follows. Catalyzes the NADPH-dependent reduction of N-acetyl-5-glutamyl phosphate to yield N-acetyl-L-glutamate 5-semialdehyde. The sequence is that of N-acetyl-gamma-glutamyl-phosphate reductase from Shewanella sediminis (strain HAW-EB3).